We begin with the raw amino-acid sequence, 232 residues long: Protein FAM246A (232 aa).

Disordered stretches follow at residues 1–47 (MATP…RAPG), 153–178 (LPPPPPSPPARREPRAVPRATPRGPT), and 191–232 (AASR…GGGD). A compositionally biased stretch (basic and acidic residues) spans 19 to 31 (EVLRRVTGRRRDP). Over residues 211 to 220 (APVRKNHKKM) the composition is skewed to basic residues.

This sequence belongs to the FAM246 family.

This chain is Protein FAM246A, found in Homo sapiens (Human).